Consider the following 496-residue polypeptide: Isocitrate dehydrogenase [NADP] (496 aa).

NADP(+) contacts are provided by L88 and T90. D-threo-isocitrate-binding residues include S98, N100, R104, R114, and R137. Residues N193, Q229, and K232 each coordinate NADP(+). D248 is a Mg(2+) binding site. NADP(+) contacts are provided by E277, G281, S282, A283, K285, Y286, and N293.

Belongs to the isocitrate and isopropylmalate dehydrogenases family. In terms of assembly, homodimer. Mg(2+) is required as a cofactor. The cofactor is Mn(2+).

It carries out the reaction D-threo-isocitrate + NADP(+) = 2-oxoglutarate + CO2 + NADPH. Functionally, catalyzes the oxidative decarboxylation of isocitrate to 2-oxoglutarate and carbon dioxide with the concomitant reduction of NADP(+). The sequence is that of Isocitrate dehydrogenase [NADP] (icd) from Thermus thermophilus (strain ATCC 27634 / DSM 579 / HB8).